A 507-amino-acid polypeptide reads, in one-letter code: Histidine ammonia-lyase (507 aa).

Residues 141-143 constitute a cross-link (5-imidazolinone (Ala-Gly)); that stretch reads ASG. Ser142 is subject to 2,3-didehydroalanine (Ser).

Belongs to the PAL/histidase family. Contains an active site 4-methylidene-imidazol-5-one (MIO), which is formed autocatalytically by cyclization and dehydration of residues Ala-Ser-Gly.

It localises to the cytoplasm. It catalyses the reaction L-histidine = trans-urocanate + NH4(+). It functions in the pathway amino-acid degradation; L-histidine degradation into L-glutamate; N-formimidoyl-L-glutamate from L-histidine: step 1/3. This is Histidine ammonia-lyase from Burkholderia pseudomallei (strain 1106a).